The chain runs to 418 residues: Gamma-glutamyl phosphate reductase (418 aa).

The protein belongs to the gamma-glutamyl phosphate reductase family.

The protein resides in the cytoplasm. The enzyme catalyses L-glutamate 5-semialdehyde + phosphate + NADP(+) = L-glutamyl 5-phosphate + NADPH + H(+). It participates in amino-acid biosynthesis; L-proline biosynthesis; L-glutamate 5-semialdehyde from L-glutamate: step 2/2. Its function is as follows. Catalyzes the NADPH-dependent reduction of L-glutamate 5-phosphate into L-glutamate 5-semialdehyde and phosphate. The product spontaneously undergoes cyclization to form 1-pyrroline-5-carboxylate. The polypeptide is Gamma-glutamyl phosphate reductase (Geobacter metallireducens (strain ATCC 53774 / DSM 7210 / GS-15)).